The sequence spans 891 residues: Protein translocase subunit SecA (891 aa).

ATP-binding positions include glutamine 83, 101 to 105 (GEGKT), and aspartate 489.

It belongs to the SecA family.

It localises to the plastid. The protein localises to the chloroplast stroma. The protein resides in the chloroplast thylakoid membrane. The enzyme catalyses ATP + H2O + cellular proteinSide 1 = ADP + phosphate + cellular proteinSide 2.. In terms of biological role, has a central role in coupling the hydrolysis of ATP to the transfer of proteins across the thylakoid membrane. The polypeptide is Protein translocase subunit SecA (Diacronema lutheri (Unicellular marine alga)).